The primary structure comprises 219 residues: Uracil-DNA glycosylase (219 aa).

Asp-61 serves as the catalytic Proton acceptor.

It belongs to the uracil-DNA glycosylase (UDG) superfamily. UNG family.

It localises to the cytoplasm. The enzyme catalyses Hydrolyzes single-stranded DNA or mismatched double-stranded DNA and polynucleotides, releasing free uracil.. Excises uracil residues from the DNA which can arise as a result of misincorporation of dUMP residues by DNA polymerase or due to deamination of cytosine. The chain is Uracil-DNA glycosylase from Exiguobacterium sibiricum (strain DSM 17290 / CCUG 55495 / CIP 109462 / JCM 13490 / 255-15).